The primary structure comprises 259 residues: Global transcriptional regulator CodY (259 aa).

Positions 1–155 are GAF domain; the sequence is MNLLAKTRKL…GATVVGMEIL (155 aa). The segment at residues 203 to 222 is a DNA-binding region (H-T-H motif); sequence ASKIADRVGITRSVIVNALR.

Belongs to the CodY family.

Its subcellular location is the cytoplasm. Its function is as follows. DNA-binding global transcriptional regulator which is involved in the adaptive response to starvation and acts by directly or indirectly controlling the expression of numerous genes in response to nutrient availability. During rapid exponential growth, CodY is highly active and represses genes whose products allow adaptation to nutrient depletion. This chain is Global transcriptional regulator CodY, found in Exiguobacterium sibiricum (strain DSM 17290 / CCUG 55495 / CIP 109462 / JCM 13490 / 255-15).